Consider the following 528-residue polypeptide: Protein arginine N-methyltransferase 3 (528 aa).

The disordered stretch occupies residues 1-43 (MCSLAAGNGRGAELGPEPLELSDSGDDAGWEDEDADTEPAHGR). The residue at position 2 (Cys2) is an N-acetylcysteine. Phosphoserine is present on residues Ser22 and Ser24. The span at 23-37 (DSGDDAGWEDEDADT) shows a compositional bias: acidic residues. The C2H2-type zinc finger occupies 46-69 (TPCLFCDRLFASAEETFSHCKLEH). Ser169 is subject to Phosphoserine. The mediates interaction with ALDH1A1 stretch occupies residues 184-528 (MKQFAQDFVM…NSSTQTYSLQ (345 aa)). Residues 214-528 (DGVYFSSYGH…NSSTQTYSLQ (315 aa)) form the SAM-dependent MTase PRMT-type domain. Positions 236, 260, 282, 284, 310, and 311 each coordinate S-adenosyl-L-homocysteine. Active-site residues include Glu326 and Glu335.

It belongs to the class I-like SAM-binding methyltransferase superfamily. Protein arginine N-methyltransferase family. In terms of assembly, monomer and homodimer. Interacts with EPB41L3 (via FERM domain); the interaction is direct and inhibits the protein-arginine N-methyltransferase activity of PRMT3. Interacts with the 40S ribosomal protein RPS2. Interacts with ALDH1A1; the interaction is direct, inhibits ALDH1A1 aldehyde dehydrogenase activity and is independent of the methyltransferase activity of PRMT3.

The protein resides in the cytoplasm. The protein localises to the cytosol. It localises to the nucleus. The catalysed reaction is L-arginyl-[protein] + S-adenosyl-L-methionine = N(omega)-methyl-L-arginyl-[protein] + S-adenosyl-L-homocysteine + H(+). It carries out the reaction L-arginyl-[protein] + 2 S-adenosyl-L-methionine = N(omega),N(omega)-dimethyl-L-arginyl-[protein] + 2 S-adenosyl-L-homocysteine + 2 H(+). Inhibited by N-ethylmaleimide and high concentrations of zinc chloride. Functionally, protein-arginine N-methyltransferase that catalyzes both the monomethylation and asymmetric dimethylation of the guanidino nitrogens of arginine residues in target proteins, and therefore falls into the group of type I methyltransferases. Catalyzes the asymmetric arginine dimethylation at multiple sites in the Arg/Gly-rich region of small ribosomal subunit protein uS5/RPS2. Also appears to methylate other ribosomal proteins. May regulate retinoic acid synthesis and signaling by inhibiting ALDH1A1 retinal dehydrogenase activity. Contributes to methylation of histone H4 'Arg-3', a specific tag for epigenetic transcriptional activation. Promotes osteogenesis. This chain is Protein arginine N-methyltransferase 3, found in Mus musculus (Mouse).